Reading from the N-terminus, the 545-residue chain is Putative serine/threonine-protein kinase L673 (545 aa).

The Cyclin N-terminal domain occupies 13–125 (RLGLVNWMLN…YKVYYLTIWK (113 aa)). The Protein kinase domain occupies 264–543 (IDFQNKLGSG…NCLKKIKESF (280 aa)). Residues 270–278 (LGSGTYGSV) and K291 each bind ATP. D384 acts as the Proton acceptor in catalysis.

This sequence belongs to the protein kinase superfamily. Ser/Thr protein kinase family.

It carries out the reaction L-seryl-[protein] + ATP = O-phospho-L-seryl-[protein] + ADP + H(+). The catalysed reaction is L-threonyl-[protein] + ATP = O-phospho-L-threonyl-[protein] + ADP + H(+). This chain is Putative serine/threonine-protein kinase L673, found in Acanthamoeba polyphaga (Amoeba).